A 191-amino-acid chain; its full sequence is Xanthine phosphoribosyltransferase (191 aa).

Leu-20 and Asn-27 together coordinate xanthine. 128 to 132 serves as a coordination point for 5-phospho-alpha-D-ribose 1-diphosphate; sequence ANGQA. Xanthine is bound at residue Lys-156.

This sequence belongs to the purine/pyrimidine phosphoribosyltransferase family. Xpt subfamily. In terms of assembly, homodimer.

The protein localises to the cytoplasm. The enzyme catalyses XMP + diphosphate = xanthine + 5-phospho-alpha-D-ribose 1-diphosphate. It participates in purine metabolism; XMP biosynthesis via salvage pathway; XMP from xanthine: step 1/1. Functionally, converts the preformed base xanthine, a product of nucleic acid breakdown, to xanthosine 5'-monophosphate (XMP), so it can be reused for RNA or DNA synthesis. The chain is Xanthine phosphoribosyltransferase from Acinetobacter baylyi (strain ATCC 33305 / BD413 / ADP1).